Here is a 129-residue protein sequence, read N- to C-terminus: C-phycocyanin beta subunit (129 aa).

Position 62 is an N4-methylasparagine (N62). A (2R,3E)-phycocyanobilin-binding site is contributed by C116.

This sequence belongs to the phycobiliprotein family. Heterodimer of an alpha and a beta subunit, which further assembles into trimers and the trimers into hexamers. Two isomers exist. Post-translationally, contains two covalently linked bilin chromophores.

Its subcellular location is the cellular thylakoid membrane. Functionally, light-harvesting photosynthetic bile pigment-protein from the phycobiliprotein complex (phycobilisome, PBS). Phycocyanin is the major phycobiliprotein in the PBS rod. In Aphanizomenon flos-aquae, this protein is C-phycocyanin beta subunit.